The primary structure comprises 2672 residues: eIF-2-alpha kinase activator GCN1 (2672 aa).

HEAT repeat units follow at residues 5 to 42, 79 to 117, 174 to 211, 227 to 267, 329 to 366, 372 to 410, 509 to 549, 611 to 648, 706 to 745, 902 to 932, and 933 to 970; these read LNWE…QETL, NLEP…WINS, CIFQ…YSKL, QAAL…NPPS, FASS…KISN, EDLT…THYE, HGHA…NSSI, KYVT…IFNI, IQPN…EEGV, QDYL…IDSI, and SLTY…EEDE. An HEAT 12; degenerate repeat occupies 975–994; that stretch reads LLLAMEIISVHAEAFEDPSI. The stretch at 995 to 1030 is one HEAT 13; degenerate repeat; sequence PRISIVEVLLSLLSLPSKAKIAKDCFNALCQSISVA. HEAT repeat units follow at residues 1031–1067, 1099–1138, 1185–1224, 1243–1281, 1284–1321, 1363–1401, 1405–1442, 1444–1480, 1484–1521, 1523–1559, 1561–1598, 1603–1640, 1641–1679, 1681–1717, 1721–1758, 1760–1796, 1825–1862, 1863–1903, 1905–1942, 1947–1984, 1985–2024, 2026–2055, 2057–2095, 2097–2134, 2138–2175, 2206–2243, 2250–2286, 2290–2328, 2347–2384, 2392–2429, 2450–2487, and 2506–2546; these read PNQE…LEPF, VVND…FTSE, STVA…REPI, QNSK…HLQQ, ARIH…QFKQ, LSEF…SLGK, PYVI…HTTG, GVKK…LDPT, ASLS…VIRN, EIQK…HYID, PSLA…LVDT, PYLQ…RLGE, EQFP…GLGL, KLDE…CFGS, PYIN…NYAT, AVDL…QVTG, DRRD…NTPR, AVKE…RVGG, ALSQ…SAST, QFQS…VVGK, TAVD…VIFP, LIPT…SALY, RLSI…SVND, EGLH…KTVL, VYIP…KVDK, RGPN…KTPA, VSVI…KIPM, PFIP…HQPR, GVKT…EEML, VAYA…ETGK, GLID…LEGE, and ENIN…FKFD. Positions 1330–1641 are EF3-like region; the sequence is LMEKLLNPTV…GALVERLGEE (312 aa). The segment at 2207–2356 is RWDBD region; it reads GPNCVLPIFL…GVKTAMLKAL (150 aa).

This sequence belongs to the GCN1 family. As to quaternary structure, interacts (via N- and C-terminus) with GCN2 (via N-terminal RWD domain); this interaction stimulates GCN2 kinase activity in a GCN20-dependent manner in response to amino acid starvation. Interacts (via C-terminus) with GCN20 (via N-terminus); this interaction stimulates GCN2 kinase activity in response to amino acid starvation. The GCN1-GCN20 complex interacts with GCN2 on translating ribosomes in amino acid-starved cells; GCN1 may bind near the ribosomal A-site and promotes the transfer of uncharged tRNAs from the A-site to the tRNA-binding domain in GCN2 for its subsequent kinase activation, and hence allowing GCN4 translational activation and derepression of amino acid biosynthetic genes. Interacts (via C-terminus) with YIH1 (via N-terminus); this interaction reduces the GCN1-GCN20 complex formation and prevents the interaction of GCN1 with GCN2 and GCN2 kinase activation in amino acid-starved cells. Interacts with GIR2; this interaction prevents the interaction of GCN1 with GCN2 and GCN2 kinase activation in amino acid-starved cells. Interacts (via middle region) with RPS10A and RPS10B; these interactions are direct and promote GCN2 kinase activation. Associates (via N-terminus) with ribosomes; this association is stimulated in a ATP- and GCN20-dependent manner and is necessary to activate GCN2 kinase activity.

It localises to the cytoplasm. Functionally, ribosome collision sensor that activates a translation quality control pathway when a ribosome has stalled during translation. Directly binds to the ribosome and acts as a sentinel for colliding ribosomes. GCN1 also acts as a positive activator of the integrated stress response (ISR) by mediating activation of GCN2 in response to low amino acid, carbon, or purine availability. Component of the GCN1-GCN20 complex that forms a complex with GCN2 on translating ribosomes: during this process, GCN1 acts as a chaperone to facilitate delivery of uncharged tRNAs that enter the A-site of ribosomes to the tRNA-binding domain of GCN2, and hence stimulating GCN2 kinase activity, leading to phosphorylation of eukaryotic translation initiation factor 2 (eIF-2-alpha/SUI2). eIF-2-alpha/SUI2 phosphorylation converts eIF-2-alpha/SUI2 into a global protein synthesis inhibitor, leading to a global attenuation of cap-dependent translation, and thus to a reduced overall utilization of amino acids, while concomitantly initiating the preferential translation of ISR-specific mRNAs, such as the transcriptional activator GCN4, and hence allowing GCN4-mediated reprogramming of amino acid biosynthetic gene expression to alleviate nutrient depletion. The chain is eIF-2-alpha kinase activator GCN1 from Saccharomyces cerevisiae (strain ATCC 204508 / S288c) (Baker's yeast).